We begin with the raw amino-acid sequence, 152 residues long: Pleckstrin homology-like domain family A member 2 (152 aa).

Phosphoserine occurs at positions 3 and 42. The PH domain occupies 7–99 (VLREGELEKR…WNAAIALALI (93 aa)). Positions 112–152 (SRQERTAPAAPAEDAVAAAAAAPSEPSEPSRPSPQPKPRTP) are disordered. A compositionally biased stretch (low complexity) spans 118–138 (APAAPAEDAVAAAAAAPSEPS). The span at 140–152 (PSRPSPQPKPRTP) shows a compositional bias: pro residues. Residues Ser-141 and Ser-144 each carry the phosphoserine modification. Position 151 is a phosphothreonine (Thr-151).

This sequence belongs to the PHLDA2 family. Expressed in placenta and adult prostate gland. In placenta, it is present in all cells of the villous cytotrophoblast. The protein is absent in cells from hydatidiform moles. Hydatidiform mole is a gestation characterized by abnormal development of both fetus and trophoblast. The majority of hydatidiform moles are associated with an excess of paternal to maternal genomes and are likely to result from the abnormal expression of imprinted genes (at protein level). Expressed at low levels in adult liver and lung, and fetal liver. Expressed in adult brain and neuroblastoma, medullablastoma and glioblastoma cell lines.

The protein resides in the cytoplasm. It localises to the membrane. Its function is as follows. Plays a role in regulating placenta growth. May act via its PH domain that competes with other PH domain-containing proteins, thereby preventing their binding to membrane lipids. The chain is Pleckstrin homology-like domain family A member 2 (PHLDA2) from Homo sapiens (Human).